The primary structure comprises 119 residues: DNA-binding protein inhibitor ID-3 (119 aa).

Residues 28–80 enclose the bHLH domain; that stretch reads RGKSPSTEEPLSLLDDMNHCYSRLRELVPGVPRGTQLSQVEILQRVIDYILDL. The tract at residues 35–87 is interaction with IFI204; it reads EEPLSLLDDMNHCYSRLRELVPGVPRGTQLSQVEILQRVIDYILDLQVVLAEP.

Homodimer, and heterodimer with other HLH proteins. Interacts with CLOCK and BMAL1. Interacts with COPS5 and COPS7A. Interacts with IFI204. Interacts with GATA4 and NKX2-5. Interacts with ANKRD2; both proteins cooperate in myoblast differentiation. In terms of processing, polyubiquitinated; which is favored by Ifi204 and leads to proteasomal degradation. In terms of tissue distribution, expressed by myoblasts (at protein level).

The protein localises to the nucleus. Its subcellular location is the cytoplasm. Transcriptional regulator (lacking a basic DNA binding domain) which negatively regulates the basic helix-loop-helix (bHLH) transcription factors by forming heterodimers and inhibiting their DNA binding and transcriptional activity. Implicated in regulating a variety of cellular processes, including cellular growth, senescence, differentiation, apoptosis, angiogenesis, and neoplastic transformation. Involved in myogenesis by inhibiting skeletal muscle and cardiac myocyte differentiation and promoting muscle precursor cells proliferation. Inhibits the binding of E2A-containing protein complexes to muscle creatine kinase E-box enhancer. Regulates the circadian clock by repressing the transcriptional activator activity of the CLOCK-BMAL1 heterodimer. The polypeptide is DNA-binding protein inhibitor ID-3 (Id3) (Mus musculus (Mouse)).